Consider the following 816-residue polypeptide: Neuroligin-4, Y-linked (816 aa).

Residues Met1–Ala43 form the signal peptide. Residues Gln44–Ser676 are Extracellular-facing. N-linked (GlcNAc...) asparagine glycosylation occurs at Asn102. 2 cysteine pairs are disulfide-bonded: Cys110–Cys146 and Cys306–Cys317. Residues Gln359–Asn364 are interaction with NRXN1. Cys476 and Cys510 are joined by a disulfide. Asn511 is a glycosylation site (N-linked (GlcNAc...) asparagine). Positions Thr636–Glu659 are disordered. Residues His649–Pro658 show a composition bias toward basic and acidic residues. A helical transmembrane segment spans residues Val677–Tyr697. Residues Tyr698–Val816 are Cytoplasmic-facing. Ser712 is modified (phosphoserine).

It belongs to the type-B carboxylesterase/lipase family. In terms of assembly, homodimer. Interacts with NRXN1 in a calcium-dependent manner. Interaction with neurexins is mediated by heparan sulfate glycan modification on neurexin. Interacts through its C-terminus with DLG4/PSD-95 third PDZ domain. As to expression, expressed in fetal and adult brain, prostate and testis.

It localises to the cell membrane. Its subcellular location is the postsynaptic density membrane. Cell surface protein involved in cell-cell-interactions via its interactions with neurexin family members. The polypeptide is Neuroligin-4, Y-linked (NLGN4Y) (Homo sapiens (Human)).